A 732-amino-acid chain; its full sequence is DNA gyrase subunit B, mitochondrial (732 aa).

Residues 513-620 form the Toprim domain; sequence SEIFIVEGDS…RYQRALFDAG (108 aa). Mg(2+)-binding residues include Glu-519, Asp-593, and Asp-595.

It belongs to the type II topoisomerase GyrB family. In terms of assembly, made up of two chains. The A chain is responsible for DNA breakage and rejoining; the B chain catalyzes ATP hydrolysis. Mg(2+) serves as cofactor. The cofactor is Mn(2+). It depends on Ca(2+) as a cofactor.

Its subcellular location is the mitochondrion. The enzyme catalyses ATP-dependent breakage, passage and rejoining of double-stranded DNA.. In terms of biological role, a type II topoisomerase that negatively supercoils closed circular double-stranded DNA in an ATP-dependent manner. This Arabidopsis thaliana (Mouse-ear cress) protein is DNA gyrase subunit B, mitochondrial (GYRBM).